A 317-amino-acid chain; its full sequence is Small ribosomal subunit protein uS2 (317 aa).

Ser2 is subject to N-acetylserine. Laminin-binding stretches follow at residues 161–180 (IPCN…MLSR) and 205–229 (RDPE…EFQG). 2 [DE]-W-[ST] repeats span residues 230–232 (EWT) and 245–247 (DWS). The laminin-binding stretch occupies residues 242–317 (EVADWSEGVA…EWGGASADWS (76 aa)). Low complexity predominate over residues 271–284 (EAAAPSKAPAAAEG). Residues 271–317 (EAAAPSKAPAAAEGFAEDWSAQPATEDWSAAPTAQATEWGGASADWS) form a disordered region. [DE]-W-[ST] repeat units follow at residues 288–290 (DWS), 297–299 (DWS), and 315–317 (DWS).

Belongs to the universal ribosomal protein uS2 family. As to quaternary structure, monomer (37LRP) and homodimer (67LR). Component of the small ribosomal subunit. Mature ribosomes consist of a small (40S) and a large (60S) subunit. The 40S subunit contains about 33 different proteins and 1 molecule of RNA (18S). The 60S subunit contains about 49 different proteins and 3 molecules of RNA (28S, 5.8S and 5S). Interacts with rps21. Interacts with several laminins including at least lamb1. Interacts with mdk. Post-translationally, acylated. Acylation may be a prerequisite for conversion of the monomeric 37 kDa laminin receptor precursor (37LRP) to the mature dimeric 67 kDa laminin receptor (67LR), and may provide a mechanism for membrane association. In terms of processing, cleaved by stromelysin-3 (ST3) at the cell surface. Cleavage by stromelysin-3 may be a mechanism to alter cell-extracellular matrix interactions.

The protein localises to the cell membrane. The protein resides in the cytoplasm. It is found in the nucleus. Its function is as follows. Required for the assembly and/or stability of the 40S ribosomal subunit. Required for the processing of the 20S rRNA-precursor to mature 18S rRNA in a late step of the maturation of 40S ribosomal subunits. Also functions as a cell surface receptor for laminin. Plays a role in cell adhesion to the basement membrane and in the consequent activation of signaling transduction pathways. May play a role in cell fate determination and tissue morphogenesis. This chain is Small ribosomal subunit protein uS2 (rpsa), found in Salmo salar (Atlantic salmon).